The sequence spans 372 residues: 4-hydroxy-3-methylbut-2-en-1-yl diphosphate synthase (flavodoxin) (372 aa).

[4Fe-4S] cluster-binding residues include Cys270, Cys273, Cys305, and Glu312.

It belongs to the IspG family. Requires [4Fe-4S] cluster as cofactor.

The catalysed reaction is (2E)-4-hydroxy-3-methylbut-2-enyl diphosphate + oxidized [flavodoxin] + H2O + 2 H(+) = 2-C-methyl-D-erythritol 2,4-cyclic diphosphate + reduced [flavodoxin]. The protein operates within isoprenoid biosynthesis; isopentenyl diphosphate biosynthesis via DXP pathway; isopentenyl diphosphate from 1-deoxy-D-xylulose 5-phosphate: step 5/6. Converts 2C-methyl-D-erythritol 2,4-cyclodiphosphate (ME-2,4cPP) into 1-hydroxy-2-methyl-2-(E)-butenyl 4-diphosphate. This Salmonella schwarzengrund (strain CVM19633) protein is 4-hydroxy-3-methylbut-2-en-1-yl diphosphate synthase (flavodoxin).